Consider the following 353-residue polypeptide: Uroporphyrinogen decarboxylase (353 aa).

Substrate is bound by residues 27-31 (RQAGR), F46, D76, Y152, S207, and H321.

The protein belongs to the uroporphyrinogen decarboxylase family. As to quaternary structure, homodimer.

Its subcellular location is the cytoplasm. It carries out the reaction uroporphyrinogen III + 4 H(+) = coproporphyrinogen III + 4 CO2. It participates in porphyrin-containing compound metabolism; protoporphyrin-IX biosynthesis; coproporphyrinogen-III from 5-aminolevulinate: step 4/4. Functionally, catalyzes the decarboxylation of four acetate groups of uroporphyrinogen-III to yield coproporphyrinogen-III. The protein is Uroporphyrinogen decarboxylase of Listeria monocytogenes serotype 4b (strain CLIP80459).